Reading from the N-terminus, the 377-residue chain is Nitric oxide reductase FlRd-NAD(+) reductase (377 aa).

Belongs to the FAD-dependent oxidoreductase family. The cofactor is FAD.

It localises to the cytoplasm. The catalysed reaction is 2 reduced [nitric oxide reductase rubredoxin domain] + NAD(+) + H(+) = 2 oxidized [nitric oxide reductase rubredoxin domain] + NADH. The protein operates within nitrogen metabolism; nitric oxide reduction. One of at least two accessory proteins for anaerobic nitric oxide (NO) reductase. Reduces the rubredoxin moiety of NO reductase. The protein is Nitric oxide reductase FlRd-NAD(+) reductase of Escherichia coli O17:K52:H18 (strain UMN026 / ExPEC).